The sequence spans 40 residues: SLALAGTIIEGASLTFSVLTTILDALGSVSRKIDVGVYNE.

Residues 3–12 (ALAGTIIEGA) are plays an important role in the hemolytic activity. The N-terminal region stretch occupies residues 11-30 (GASLTFSVLTTILDALGSVS).

It belongs to the actinoporin family. Sea anemone subfamily. In terms of assembly, octamer or nonamer in membranes. Monomer in the soluble state.

Its subcellular location is the secreted. It localises to the nematocyst. The protein resides in the target cell membrane. In terms of biological role, pore-forming protein that forms cations-selective hydrophilic pores of around 1 nm and causes cytolysis. Pore formation is a multi-step process that involves specific recognition of membrane sphingomyelin (but neither cholesterol nor phosphatidylcholine) using aromatic rich region and adjacent phosphocholine (POC) binding site, firm binding to the membrane (mainly driven by hydrophobic interactions) accompanied by the transfer of the N-terminal region to the lipid-water interface and finally pore formation after oligomerization of monomers. This toxin shows hemolytic activities. In Entacmaea quadricolor (Bubble-tip anemone), this protein is Cytolysin EnT.